The primary structure comprises 162 residues: CASP-like protein BLE3 (162 aa).

At 1–7 (MAKVHRL) the chain is on the cytoplasmic side. A helical membrane pass occupies residues 8–28 (MNAVLRLAAAAAAATAAVVMV). The Extracellular portion of the chain corresponds to 29–50 (TSRETTSFFGIQMEAKYSYTPS). Residues 51-71 (FIFFVVAYAVAAAYSLLVLAV) form a helical membrane-spanning segment. Residues 72–85 (PAGSALSRLALTTD) lie on the Cytoplasmic side of the membrane. A helical transmembrane segment spans residues 86-106 (VVLGMVLAGAVASAGAISDIA). The Extracellular portion of the chain corresponds to 107–128 (KNGNSHAGWLPVCGQIHAYCNH). A helical transmembrane segment spans residues 129–149 (VMAALIAGFVALAVHFVVVMY). Over 150 to 162 (SLHIVTDVICPCH) the chain is Cytoplasmic.

It belongs to the Casparian strip membrane proteins (CASP) family. Homodimer and heterodimers.

It localises to the cell membrane. In terms of biological role, involved in cell elongation in rice through dual regulation by brassinolide and auxin. The protein is CASP-like protein BLE3 (BLE3) of Oryza sativa subsp. indica (Rice).